The primary structure comprises 264 residues: tRNA pseudouridine synthase A (264 aa).

Aspartate 51 serves as the catalytic Nucleophile. Tyrosine 109 lines the substrate pocket.

Belongs to the tRNA pseudouridine synthase TruA family. In terms of assembly, homodimer.

The catalysed reaction is uridine(38/39/40) in tRNA = pseudouridine(38/39/40) in tRNA. Formation of pseudouridine at positions 38, 39 and 40 in the anticodon stem and loop of transfer RNAs. In Vibrio atlanticus (strain LGP32) (Vibrio splendidus (strain Mel32)), this protein is tRNA pseudouridine synthase A.